A 324-amino-acid chain; its full sequence is Transmembrane protein 171 (324 aa).

A run of 4 helical transmembrane segments spans residues 22 to 42 (IFCF…LSIF), 57 to 77 (MVLK…VILA), 113 to 133 (LIFG…GIWV), and 160 to 180 (FLSL…FFVV). Positions 229–239 (PESSASAVAES) are enriched in low complexity. Disordered regions lie at residues 229–248 (PESS…LLPN) and 279–304 (YTIS…PPRY). Residues 279-291 (YTISGTNSSSEAS) are compositionally biased toward polar residues.

The protein resides in the membrane. In Homo sapiens (Human), this protein is Transmembrane protein 171 (TMEM171).